Reading from the N-terminus, the 577-residue chain is Arginine--tRNA ligase (577 aa).

Residues 122 to 132 (PNVAKEMHVGH) carry the 'HIGH' region motif.

Belongs to the class-I aminoacyl-tRNA synthetase family. As to quaternary structure, monomer.

Its subcellular location is the cytoplasm. The enzyme catalyses tRNA(Arg) + L-arginine + ATP = L-arginyl-tRNA(Arg) + AMP + diphosphate. This Salmonella paratyphi B (strain ATCC BAA-1250 / SPB7) protein is Arginine--tRNA ligase.